The following is a 384-amino-acid chain: Dehydrogenase ALT3 (384 aa).

Belongs to the iron-containing alcohol dehydrogenase family. Fe cation is required as a cofactor.

Its pathway is mycotoxin biosynthesis. Its function is as follows. Dehydrogenase; part of the gene cluster that mediates the biosynthesis of the host-selective toxins (HSTs) AAL-toxins, sphinganine-analog mycotoxins responsible for Alternaria stem canker on tomato by the tomato pathotype. The biosynthesis starts with the polyketide synthase ALT1-catalyzed C-16 carbon chain assembly from one starter acetyl-CoA unit with malonyl-CoA extender units. ALT1 also selectively transfers methyl groups at the first and the third cycle of chain elongation for AAL toxin. The C-16 polyketide chain is released from the enzyme by a nucleophilic attack of a carbanion, which is derived from R-carbon of glycin by decarboxylation, on the carbonyl carbon of polyketide acyl chain. This step is probably catalyzed by a pyridoxal 5'-phosphate-dependent aminoacyl transferase ALT4. The respective functions of the other enzymes encoded by the cluster have still to be elucidated. The sphingosine N-acyltransferase-like protein ALT7 seems not to act as a resistance/self-tolerance factor against the toxin in the toxin biosynthetic gene cluster, contrary to what is expected. The sequence is that of Dehydrogenase ALT3 from Alternaria alternata (Alternaria rot fungus).